Reading from the N-terminus, the 305-residue chain is Serine/threonine-protein kinase 16 (305 aa).

Residue Gly2 is the site of N-myristoyl glycine attachment. 2 S-palmitoyl cysteine lipidation sites follow: Cys6 and Cys8. A Protein kinase domain is found at 20-293 (YLFVQKLGEG…PVLLSQLEAL (274 aa)). Residues 26-34 (LGEGGFSYV) and Lys49 each bind ATP. The Proton acceptor role is filled by Asp148. Residues 166 to 202 (DLGSMNQACIQVEGSRQALALQDWAAQRCTISYRAPE) form an activation loop region. The residue at position 197 (Ser197) is a Phosphoserine; by autocatalysis. At Tyr198 the chain carries Phosphotyrosine; by autocatalysis.

This sequence belongs to the protein kinase superfamily. Ser/Thr protein kinase family. In terms of assembly, monomer. Interacts with DRG1 (via its N-terminal); the interaction phosphorylates DRG1. Post-translationally, mainly autophosphorylated on serine/threonine residues. Also autophosphorylated on Tyr-198. In terms of tissue distribution, ubiquitously expressed at low levels. Relatively higher levels in testis, kidney and liver.

Its subcellular location is the cytoplasm. The protein resides in the perinuclear region. The protein localises to the membrane. The enzyme catalyses L-seryl-[protein] + ATP = O-phospho-L-seryl-[protein] + ADP + H(+). It carries out the reaction L-threonyl-[protein] + ATP = O-phospho-L-threonyl-[protein] + ADP + H(+). It catalyses the reaction L-tyrosyl-[protein] + ATP = O-phospho-L-tyrosyl-[protein] + ADP + H(+). Membrane-associated protein kinase that phosphorylates on serine and threonine residues. In vitro substrates include DRG1, ENO1 and EIF4EBP1. Also autophosphorylates. May be involved in secretory vesicle trafficking or intracellular signaling. May have a role in regulating stromal-epithelial interactions that occur during ductal morphogenesis in the mammary gland. May be involved in TGF-beta signaling. Able to autophosphorylate on Tyr residue; it is however unclear whether it has tyrosine-protein kinase toward other proteins. The sequence is that of Serine/threonine-protein kinase 16 (Stk16) from Mus musculus (Mouse).